We begin with the raw amino-acid sequence, 503 residues long: Variant surface glycoprotein AnTaT 1.1 (503 aa).

The first 29 residues, 1–29 (MVTKERNAALKIVMLVASALTLHPQQALA), serve as a signal peptide directing secretion. 2 cysteine pairs are disulfide-bonded: Cys45-Cys172 and Cys154-Cys209. A glycan (N-linked (GlcNAc...) asparagine) is linked at Asn113. 2 N-linked (GlcNAc...) asparagine glycosylation sites follow: Asn419 and Asn432. A lipid anchor (GPI-anchor amidated aspartate) is attached at Asp480. Positions 481–503 (SSILLTKNFALSVVSAALVALLF) are cleaved as a propeptide — removed in mature form.

The protein localises to the cell membrane. Its function is as follows. VSG forms a coat on the surface of the parasite. The trypanosome evades the immune response of the host by expressing a series of antigenically distinct VSGs from an estimated 1000 VSG genes. The chain is Variant surface glycoprotein AnTaT 1.1 from Trypanosoma brucei brucei.